A 229-amino-acid chain; its full sequence is Histidine biosynthesis bifunctional protein HisIE (229 aa).

Residues 1 to 127 (MNTLLDGIDW…APDTSALYGV (127 aa)) form a phosphoribosyl-AMP cyclohydrolase region. The segment at 128-229 (VDRLYHELLA…IAEKNSRKDS (102 aa)) is phosphoribosyl-ATP pyrophosphohydrolase.

In the N-terminal section; belongs to the PRA-CH family. The protein in the C-terminal section; belongs to the PRA-PH family.

The protein localises to the cytoplasm. It carries out the reaction 1-(5-phospho-beta-D-ribosyl)-ATP + H2O = 1-(5-phospho-beta-D-ribosyl)-5'-AMP + diphosphate + H(+). The catalysed reaction is 1-(5-phospho-beta-D-ribosyl)-5'-AMP + H2O = 1-(5-phospho-beta-D-ribosyl)-5-[(5-phospho-beta-D-ribosylamino)methylideneamino]imidazole-4-carboxamide. It functions in the pathway amino-acid biosynthesis; L-histidine biosynthesis; L-histidine from 5-phospho-alpha-D-ribose 1-diphosphate: step 2/9. The protein operates within amino-acid biosynthesis; L-histidine biosynthesis; L-histidine from 5-phospho-alpha-D-ribose 1-diphosphate: step 3/9. This chain is Histidine biosynthesis bifunctional protein HisIE, found in Wolinella succinogenes (strain ATCC 29543 / DSM 1740 / CCUG 13145 / JCM 31913 / LMG 7466 / NCTC 11488 / FDC 602W) (Vibrio succinogenes).